An 81-amino-acid chain; its full sequence is Kunitz-type serine protease inhibitor BmKTT-2 (81 aa).

The signal sequence occupies residues Met1–Ala21. One can recognise a BPTI/Kunitz inhibitor domain in the interval Cys26–Cys76. 4 disulfides stabilise this stretch: Cys26–Cys76, Cys35–Cys59, Cys51–Cys72, and Cys73–Cys81.

This sequence belongs to the venom Kunitz-type family. Scorpion delta-Ktx subfamily. Delta-Ktx 3 sub-subfamily. As to expression, expressed by the venom gland.

Its subcellular location is the secreted. In terms of biological role, multifunctional toxin which inhibits serine proteases and potassium channels. Potently inhibits plasmin (Ki=8.75 nM), trypsin, chymotrypsin and elastase. Also inhibits mKv1.3/KCNA3 potassium channel currents (IC(50)=371.3 nM). The protein is Kunitz-type serine protease inhibitor BmKTT-2 of Olivierus martensii (Manchurian scorpion).